The sequence spans 282 residues: Plant cysteine oxidase 3 (282 aa).

Residues His131, His133, and His202 each coordinate Fe cation.

The protein belongs to the cysteine dioxygenase family. Fe(2+) is required as a cofactor.

Its subcellular location is the nucleus. It is found in the cytoplasm. The enzyme catalyses L-cysteine + O2 = 3-sulfino-L-alanine + H(+). In terms of biological role, catalyzes the oxidation of N-terminal cysteine residues (N-Cys), thus preparing the protein for N-end rule pathway-mediated proteasomal degradation, upstream of the N-end rule enzymes ATE1, ATE2 and PRT6. Controls the preparation of the group VII ethylene response factor (ERF-VII) proteins for degradation via the 26S proteasome N-end rule pathway. Acts as an oxygen sensor that controls the stability of ERF-VII proteins, which are stabilized in flooding-induced hypoxia, and regulate transcriptional adaptation to these adverse conditions. This Arabidopsis thaliana (Mouse-ear cress) protein is Plant cysteine oxidase 3.